We begin with the raw amino-acid sequence, 78 residues long: MKLTCMMIVAVLFLTAWTFVTADDSRNGLKNLFPKARHEMKNPEASKLNKRYGCSNAGAFCGIHPGLCCSELCLVWCT.

The N-terminal stretch at 1-22 (MKLTCMMIVAVLFLTAWTFVTA) is a signal peptide. Positions 23–49 (DDSRNGLKNLFPKARHEMKNPEASKLN) are excised as a propeptide. Intrachain disulfides connect Cys54-Cys69, Cys61-Cys73, and Cys68-Cys77. The residue at position 65 (Pro65) is a 4-hydroxyproline.

Belongs to the conotoxin O1 superfamily. Expressed by the venom duct.

The protein localises to the secreted. Functionally, delta-conotoxins bind to site 6 of voltage-gated sodium channels (Nav) and inhibit the inactivation process. The polypeptide is Delta-conotoxin-like CVIE (Conus catus (Cat cone)).